A 526-amino-acid chain; its full sequence is Medium/long-chain-fatty-acid--[acyl-carrier-protein] ligase MbtM (526 aa).

An N6-acetyllysine; by Pat mark is found at lysine 260 and lysine 511.

It belongs to the ATP-dependent AMP-binding enzyme family. Post-translationally, acetylated on Lys-511 and Lys-260 by Pat. Lys-511 is the major acetylation site. Acetylation results in the inactivation of the enzyme.

The catalysed reaction is a long-chain fatty acid + holo-[ACP] + ATP = a long-chain fatty acyl-[ACP] + AMP + diphosphate. It carries out the reaction a medium-chain fatty acid + holo-[ACP] + ATP = a medium-chain fatty acyl-[ACP] + AMP + diphosphate. The enzyme catalyses hexadecanoate + holo-[ACP] + ATP = hexadecanoyl-[ACP] + AMP + diphosphate. It catalyses the reaction hexadecanoate + ATP + H(+) = hexadecanoyl-AMP + diphosphate. The catalysed reaction is hexadecanoyl-AMP + holo-[ACP] = hexadecanoyl-[ACP] + AMP + H(+). It carries out the reaction dodecanoate + holo-[ACP] + ATP = dodecanoyl-[ACP] + AMP + diphosphate. The enzyme catalyses dodecanoate + ATP + H(+) = dodecanoyl-AMP + diphosphate. It catalyses the reaction dodecanoyl-AMP + holo-[ACP] = dodecanoyl-[ACP] + AMP + H(+). Its pathway is siderophore biosynthesis; mycobactin biosynthesis. Its activity is regulated as follows. Reversibly inactivated by post-translational acetylation by Pat in a cAMP-dependent manner and reactivated by Sir2 deacylase. Functionally, activates lipidic moieties required for mycobactin biosynthesis. Converts medium- to long-chain aliphatic fatty acids into acyl adenylate, which is further transferred on to the phosphopantetheine arm of the carrier protein MbtL. Shows a strong preference for palmitic acid (C16) and cannot use short-chain fatty acids. Proceeds via a Bi Uni Uni Bi ping-pong mechanism. During the first half-reaction (adenylation), fatty acid binds first to the free enzyme, followed by ATP and the release of pyrophosphate to form the adenylate intermediate. During the second half-reaction (ligation), holo-MbtL binds to the enzyme followed by the release of products AMP and acylated MbtL. The chain is Medium/long-chain-fatty-acid--[acyl-carrier-protein] ligase MbtM from Mycolicibacterium smegmatis (strain ATCC 700084 / mc(2)155) (Mycobacterium smegmatis).